We begin with the raw amino-acid sequence, 114 residues long: Probable gas vesicle protein J2 (114 aa).

Positions 1-10 (MTDLDHRYPG) are enriched in basic and acidic residues. The disordered stretch occupies residues 1–21 (MTDLDHRYPGEETEPYGPPSG).

It belongs to the gas vesicle GvpA family. As to quaternary structure, interacts with GvpA.

It is found in the gas vesicle. Its function is as follows. A minor component of the gas vesicle, might be involved in nucleating gas vesicle formation. Gas vesicles (GV) are hollow, gas filled proteinaceous nanostructures. It is not clear what function GVs perform in soil bacteria. This chain is Probable gas vesicle protein J2, found in Streptomyces coelicolor (strain ATCC BAA-471 / A3(2) / M145).